The chain runs to 588 residues: MAAHDDDMNRGIRPGRGSDDPSGQIAYLEQEIAVLRRKLADSPRHTRILEERIVELQTNLAGVSAQNERLANTLREARDQIVALKEEVDRLAQPPAGFGVFLTANEDGTADIFTGGRKLRVNVSPSVDLEELRRGQEVMLNEALNVVEAMEYESVGDIVTLKEILEDGERALVQGHTDEERVVRLAEPLLDITIRPGDALLLEPRSGYVYEVVPKSEVEELVLEEVPDIGYEQIGGLGNQIEMIRDAVELPYLYPDLFKEHELRPPKGVLLYGPPGCGKTLIAKAVANSLAKKVAEVTGQAQGKSFFLNIKGPELLNKYVGETERQIRLVFQRAREKASEGTPVIVFFDEMESLFRTRGSGVSSDVENTIVPQLLAEIDGVEGLQNVVVIGASNREDMIDPAILRPGRLDVKIKIERPDAEAAKDIFQKYLTERLPLHTDDLGEHGGSKATTVQSMIQTAVEHMYAESEENRFLEVTYANGDKEVLYFKDFNSGAMIENIVGRAKKMAIKDFLDKNQKGLRVSHLLQACVDEFKENEDLPNTTNPDDWARISGKKGERIVYIRTLITGKQGADTGRSIDTVANTGQYL.

Positions 1 to 10 are enriched in basic and acidic residues; it reads MAAHDDDMNR. Residues 1–23 are disordered; sequence MAAHDDDMNRGIRPGRGSDDPSG. Residues 47 to 94 adopt a coiled-coil conformation; the sequence is RILEERIVELQTNLAGVSAQNERLANTLREARDQIVALKEEVDRLAQP. 276–281 is a binding site for ATP; the sequence is GCGKTL. The docks into pockets in the proteasome alpha-ring stretch occupies residues 587–588; the sequence is YL.

The protein belongs to the AAA ATPase family. As to quaternary structure, homohexamer. Assembles into a hexameric ring structure that caps the 20S proteasome core. Strongly interacts with the prokaryotic ubiquitin-like protein Pup through a hydrophobic interface; the interacting region of ARC lies in its N-terminal coiled-coil domain. There is one Pup binding site per ARC hexamer ring. Upon ATP-binding, the C-terminus of ARC interacts with the alpha-rings of the proteasome core, possibly by binding to the intersubunit pockets.

It functions in the pathway protein degradation; proteasomal Pup-dependent pathway. Functionally, ATPase which is responsible for recognizing, binding, unfolding and translocation of pupylated proteins into the bacterial 20S proteasome core particle. May be essential for opening the gate of the 20S proteasome via an interaction with its C-terminus, thereby allowing substrate entry and access to the site of proteolysis. Thus, the C-termini of the proteasomal ATPase may function like a 'key in a lock' to induce gate opening and therefore regulate proteolysis. This is Proteasome-associated ATPase from Streptomyces scabiei (strain 87.22).